Reading from the N-terminus, the 476-residue chain is Sulfite exporter TauE/SafE family protein 3 (476 aa).

Helical transmembrane passes span 8 to 28 (WLGL…FAFV), 76 to 92 (FNWQ…FGAA), 99 to 115 (VGGG…IIGF), 120 to 142 (ATAI…NLRL), 151 to 171 (IIDY…ISIG), 172 to 192 (VAFN…VLFL), 257 to 277 (VYWK…ALQI), 291 to 311 (VINL…AVAL), 339 to 359 (FGII…FIMG), 360 to 380 (PLFL…TFAM), 397 to 417 (FPVP…WVGQ), and 433 to 453 (IIFI…GVGI).

It belongs to the 4-toluene sulfonate uptake permease (TSUP) (TC 2.A.102) family.

The protein resides in the membrane. The protein is Sulfite exporter TauE/SafE family protein 3 of Arabidopsis thaliana (Mouse-ear cress).